The following is a 32-amino-acid chain: Potassium channel toxin alpha-KTx 10.6 (32 aa).

Disulfide bonds link Cys-3–Cys-22, Cys-8–Cys-27, and Cys-12–Cys-29.

In terms of tissue distribution, expressed by the venom gland.

The protein resides in the secreted. Its function is as follows. Blocks human voltage-gated potassium (Kv) channels Kv1.2/KCNA2 and Kv1.3/KCNA3. Does not block human Kv1.1 at 100nM concentration. This Centruroides bonito (Scorpion) protein is Potassium channel toxin alpha-KTx 10.6.